Consider the following 51-residue polypeptide: GPLGGCCGGIKKSAAAGISGINYGIAAGLPGKCGVNIPYKISPSTDCSKVQ.

The protein belongs to the plant LTP family.

In terms of biological role, plant non-specific lipid-transfer proteins transfer phospholipids as well as galactolipids across membranes. May play a role in wax or cutin deposition in the cell walls of expanding epidermal cells and certain secretory tissues. The protein is Non-specific lipid-transfer protein of Lycium barbarum (Barbary matrimony-vine).